The sequence spans 306 residues: Dioxygenase FrzG (306 aa).

Fe cation-binding residues include histidine 132, aspartate 134, and histidine 216.

This sequence belongs to the PhyH family. As to quaternary structure, homodimer. It depends on Fe cation as a cofactor.

It catalyses the reaction (1S,4S)-4-[(4-methoxyphenyl)methyl]-2-methyl-2,5-diazaspiro[bicyclo[3.2.1]octane-6,1'-cyclohexan]-4'-one + 2-oxoglutarate + O2 = (2S)-3-(4-methoxyphenyl)-2-[(3S)-3-(methylamino)-8-oxo-1-azaspiro[4.5]decan-1-yl]propanal + succinate + CO2. It participates in secondary metabolite biosynthesis. In terms of biological role, dioxygenase; part of the gene cluster that mediates the biosynthesis of the alkaloid (-)-FR901483, a potent immunosuppressant that shows efficacy in animal models and a probable inhibitor of purine nucleotide biosynthesis by targeting phosphoribosylpyrophosphate amidotransferase (PPAT). Within the pathway, FrzG cleaves the C9-N10' bond to yield a conjugated iminium. FrzG is also able to catalyze the dehydrogenation between C7 and C8 which leads to a shunt product. The biosynthesis of (-)-FR901483 starts with the condensation of two L-tyrosines to yield (S,S)-dityrosyl-piperazine. This process occurs in 3 steps with the non-canonical nonribosomal peptide synthetase FrzA catalyzing the reduction of L-tyrosine into L-tyrosinal, the spontaneous condensation of 2 L-tyrosinal units, and the subsequent reduction by the NmrA-like family domain-containing oxidoreductase FrzB. The cytochrome P450 monooxygenase FrzC then performs coupling between N10 and C1' to morph the piperazine into a 1,4-diazabicyclo[3.2.1]octane spiro-fused to a 2,5-cyclohexadienone. The dienone portion is further reduced to cyclohexanone by the flavin-dependent reductase FrzD. The methyltranserases (MTs) FrzE and FrzF are then involved in the methylation at the C10' amine and the C4 phenolic oxygen, respectively. The order of the two MTs appear to be interchangeable. Cleavage of the C9-N10' bond by the dioxygenase FrzG then leads to formation of a conjugated iminium. In addition to the oxidation of C9, an additional dehydrogenation between C7 and C8 can occur to give a likely shunt product. The next biosynthetic step is the intramolecular aldol condensation catalyzed by the newly identified aldolase FrzH to yield an aza-tricyclic product with the formation of a C9-C3' bond. The short-chain dehydrogenase/reductase FrzI then produces dephospho-(-)-FR901483 that is phosphorylated at C4'-OH into (-)-FR901483 by the phosphotransferase FrzJ. In Cladobotryum sp, this protein is Dioxygenase FrzG.